The chain runs to 114 residues: Protein yippee-like (114 aa).

Residues 14 to 111 enclose the Yippee domain; sequence RTYSCVHCRA…IELAHMIKEN (98 aa). Cysteine 18, cysteine 21, cysteine 74, and cysteine 77 together coordinate Zn(2+).

It belongs to the yippee family.

Functionally, involved in regulating synaptic transmission in presynaptic neurons. In class IV dendritic arborization neurons (nociceptors), involved in regulating activation of their second-order neurons (SONs) and maintaining synaptic contact between nociceptors and their SONs. The protein is Protein yippee-like of Drosophila melanogaster (Fruit fly).